Consider the following 694-residue polypeptide: MGTHCSAWLRWPLLPLLPPLLLLLLLLCPTGAGAQDEDGDYEELMLALPSQEDGLADEAAHVATATFRRCSKEAWRLPGTYIVVLMEETQRLQIEQTAHRLQTRAARRGYVIKVLHIFYDLFPGFLVKMSSDLLGLALKLPHVEYIEEDSFVFAQSIPWNLERIIPAWHQTEEDRSPDGSSQVEVYLLDTSIQGAHREIEGRVTITDFNSVPEEDGTRFHRQASKCDSHGTHLAGVVSGRDAGVAKGTSLHSLRVLNCQGKGTVSGTLIGLEFIRKSQLIQPSGPLVVLLPLAGGYSRILNAACRHLARTGVVLVAAAGNFRDDACLYSPASAPEVITVGATNAQDQPVTLGTLGTNFGRCVDLFAPGKDIIGASSDCSTCFMSQSGTSQAAAHVAGIVARMLSREPTLTLAELRQRLIHFSTKDVINMAWFPEDQQVLTPNLVATLPPSTHETGGQLLCRTVWSAHSGPTRTATATARCAPEEELLSCSSFSRSGRRRGDWIEAIGGQQVCKALNAFGGEGVYAVARCCLVPRANCSIHNTPAARAGLETHVHCHQKDHVLTGCSFHWEVEDLSVRRQPALRSRRQPGQCVGHQAASVYASCCHAPGLECKIKEHGISGPSEQVTVACEAGWTLTGCNVLPGASLTLGAYSVDNLCVARVHDTARADRTSGEATVAAAICCRSRPSAKASWVQ.

The N-terminal stretch at 1–34 is a signal peptide; it reads MGTHCSAWLRWPLLPLLPPLLLLLLLLCPTGAGA. Residues 35–155 constitute a propeptide that is removed on maturation; sequence QDEDGDYEEL…IEEDSFVFAQ (121 aa). Y41 is modified (sulfotyrosine). Position 50 is a phosphoserine (S50). One can recognise a Peptidase S8 domain in the interval 158–470; sequence PWNLERIIPA…RTVWSAHSGP (313 aa). Catalysis depends on charge relay system residues D189 and H229. 2 disulfides stabilise this stretch: C226–C258 and C326–C361. S389 serves as the catalytic Charge relay system. Positions 453-694 are C-terminal domain; it reads ETGGQLLCRT…RPSAKASWVQ (242 aa). Cystine bridges form between C460–C530, C480–C529, and C489–C512. A Cell attachment site motif is present at residues 499-501; that stretch reads RGD. The N-linked (GlcNAc...) asparagine glycan is linked to N536. 6 disulfides stabilise this stretch: C537–C604, C555–C603, C565–C591, C611–C682, C629–C681, and C638–C657. S691 is subject to Phosphoserine.

It belongs to the peptidase S8 family. In terms of assembly, monomer. Can self-associate to form dimers and higher multimers which may have increased LDLR degrading activity. The precursor protein but not the mature protein may form multimers. Interacts with APOB, VLDLR, LRP8/APOER2 and BACE1. The full-length immature form (pro-PCSK9) interacts with SCNN1A, SCNN1B and SCNN1G. The pro-PCSK9 form (via C-terminal domain) interacts with LDLR. Interacts (via the C-terminal domain) with ANXA2 (via repeat Annexin 1); the interaction inhibits the degradation of LDLR. It depends on Ca(2+) as a cofactor. In terms of processing, cleavage by furin and PCSK5 generates a truncated inactive protein that is unable to induce LDLR degradation. Post-translationally, undergoes autocatalytic cleavage in the endoplasmic reticulum to release the propeptide from the N-terminus and the cleavage of the propeptide is strictly required for its maturation and activation. The cleaved propeptide however remains associated with the catalytic domain through non-covalent interactions, preventing potential substrates from accessing its active site. As a result, it is secreted from cells as a propeptide-containing, enzymatically inactive protein. Phosphorylation protects the propeptide against proteolysis. In terms of tissue distribution, hepatocytes, kidney mesenchymal cells, intestinal ileum, colon epithelia and embryonic brain telencephalon neurons.

It is found in the cytoplasm. The protein resides in the secreted. The protein localises to the endosome. Its subcellular location is the lysosome. It localises to the cell surface. It is found in the endoplasmic reticulum. The protein resides in the golgi apparatus. With respect to regulation, its proteolytic activity is autoinhibited by the non-covalent binding of the propeptide to the catalytic domain. Inhibited by EGTA. Functionally, crucial player in the regulation of plasma cholesterol homeostasis. Binds to low-density lipid receptor family members: low density lipoprotein receptor (LDLR), very low density lipoprotein receptor (VLDLR), apolipoprotein E receptor (LRP1/APOER) and apolipoprotein receptor 2 (LRP8/APOER2), and promotes their degradation in intracellular acidic compartments. Acts via a non-proteolytic mechanism to enhance the degradation of the hepatic LDLR through a clathrin LDLRAP1/ARH-mediated pathway. May prevent the recycling of LDLR from endosomes to the cell surface or direct it to lysosomes for degradation. Can induce ubiquitination of LDLR leading to its subsequent degradation. Inhibits intracellular degradation of APOB via the autophagosome/lysosome pathway in a LDLR-independent manner. Involved in the disposal of non-acetylated intermediates of BACE1 in the early secretory pathway. Inhibits epithelial Na(+) channel (ENaC)-mediated Na(+) absorption by reducing ENaC surface expression primarily by increasing its proteasomal degradation. Regulates neuronal apoptosis via modulation of LRP8/APOER2 levels and related anti-apoptotic signaling pathways. The polypeptide is Proprotein convertase subtilisin/kexin type 9 (Pcsk9) (Mus musculus (Mouse)).